Here is a 697-residue protein sequence, read N- to C-terminus: Elongation factor G (697 aa).

One can recognise a tr-type G domain in the interval 8–283 (EHIRNIGICA…AVVDFLPSPT (276 aa)). GTP-binding positions include 17–24 (AHIDAGKT), 81–85 (DTPGH), and 135–138 (NKMD).

Belongs to the TRAFAC class translation factor GTPase superfamily. Classic translation factor GTPase family. EF-G/EF-2 subfamily.

The protein localises to the cytoplasm. Its function is as follows. Catalyzes the GTP-dependent ribosomal translocation step during translation elongation. During this step, the ribosome changes from the pre-translocational (PRE) to the post-translocational (POST) state as the newly formed A-site-bound peptidyl-tRNA and P-site-bound deacylated tRNA move to the P and E sites, respectively. Catalyzes the coordinated movement of the two tRNA molecules, the mRNA and conformational changes in the ribosome. This Rickettsia rhipicephali protein is Elongation factor G.